The following is a 570-amino-acid chain: Urease subunit alpha (570 aa).

One can recognise a Urease domain in the interval 131–570; it reads GGFDAHIHFI…LPMAQRYFLF (440 aa). Positions 136, 138, and 219 each coordinate Ni(2+). The residue at position 219 (Lys219) is an N6-carboxylysine. Position 221 (His221) interacts with substrate. The Ni(2+) site is built by His248 and His274. His322 functions as the Proton donor in the catalytic mechanism. Asp362 contacts Ni(2+).

Belongs to the metallo-dependent hydrolases superfamily. Urease alpha subunit family. As to quaternary structure, heterotrimer of UreA (gamma), UreB (beta) and UreC (alpha) subunits. Three heterotrimers associate to form the active enzyme. Requires Ni cation as cofactor. Post-translationally, carboxylation allows a single lysine to coordinate two nickel ions.

The protein localises to the cytoplasm. It catalyses the reaction urea + 2 H2O + H(+) = hydrogencarbonate + 2 NH4(+). The protein operates within nitrogen metabolism; urea degradation; CO(2) and NH(3) from urea (urease route): step 1/1. The sequence is that of Urease subunit alpha from Chelativorans sp. (strain BNC1).